The primary structure comprises 860 residues: Leucine--tRNA ligase (860 aa).

A 'HIGH' region motif is present at residues 42 to 52; sequence PYPSGRLHMGH. Residues 619–623 carry the 'KMSKS' region motif; sequence KMSKS. Lysine 622 lines the ATP pocket.

This sequence belongs to the class-I aminoacyl-tRNA synthetase family.

Its subcellular location is the cytoplasm. The catalysed reaction is tRNA(Leu) + L-leucine + ATP = L-leucyl-tRNA(Leu) + AMP + diphosphate. The polypeptide is Leucine--tRNA ligase (Shigella dysenteriae serotype 1 (strain Sd197)).